Consider the following 88-residue polypeptide: ATP synthase subunit 9, mitochondrial (88 aa).

The next 2 helical transmembrane spans lie at 30–50 (IGLT…ILAV) and 66–86 (LGFA…FLIL).

Belongs to the ATPase C chain family. As to quaternary structure, F-type ATPases have 2 components, CF(1) - the catalytic core - and CF(0) - the membrane proton channel. CF(1) has five subunits: alpha(3), beta(3), gamma(1), delta(1), epsilon(1). CF(0) has three main subunits: a, b and c.

Its subcellular location is the mitochondrion membrane. Mitochondrial membrane ATP synthase (F(1)F(0) ATP synthase or Complex V) produces ATP from ADP in the presence of a proton gradient across the membrane which is generated by electron transport complexes of the respiratory chain. F-type ATPases consist of two structural domains, F(1) - containing the extramembraneous catalytic core and F(0) - containing the membrane proton channel, linked together by a central stalk and a peripheral stalk. During catalysis, ATP synthesis in the catalytic domain of F(1) is coupled via a rotary mechanism of the central stalk subunits to proton translocation. Part of the complex F(0) domain. A homomeric c-ring of probably 10 subunits is part of the complex rotary element. The polypeptide is ATP synthase subunit 9, mitochondrial (atp9) (Dictyostelium citrinum (Slime mold)).